The sequence spans 2771 residues: Kinesin-like protein KIN-12D (2771 aa).

Composition is skewed to basic and acidic residues over residues 1–13 (MSKETKLSRRDSD) and 40–54 (KNPKHECGSKIDRTP). Disordered regions lie at residues 1-73 (MSKE…TPDK) and 117-139 (YSETNSTQNTPTKSVSKPPGSCY). Polar residues predominate over residues 118–131 (SETNSTQNTPTKSV). Residues 193-530 (NVQILIRVRP…LKFAQRAKLI (338 aa)) enclose the Kinesin motor domain. An ATP-binding site is contributed by 274–281 (GQTGSGKT). Microtubules-binding stretches follow at residues 400 to 404 (SSRSH), 431 to 437 (VDLAGSE), and 479 to 483 (HIPYR). Coiled-coil stretches lie at residues 1033–1110 (AATA…NEME), 1267–1331 (ELKQ…MKEK), 1410–1505 (IILL…YVEN), 2108–2390 (ELED…EQVK), and 2512–2677 (RERD…LAQE). A compositionally biased stretch (basic residues) spans 2727 to 2736 (LKGKAKSRRS). The segment at 2727–2771 (LKGKAKSRRSRNPERKMPSMPSPRRSWSQSPRSMSQVPFFSSLDR) is disordered. Residues 2744–2762 (PSMPSPRRSWSQSPRSMSQ) are compositionally biased toward low complexity.

It belongs to the TRAFAC class myosin-kinesin ATPase superfamily. Kinesin family. KIN-12 subfamily. As to expression, expressed in tissues enriched in dividing cells, such as root meristems, root primordia, and leaf primordia/young leaves.

It is found in the cytoplasm. The protein resides in the cytoskeleton. The protein localises to the phragmoplast. Its function is as follows. Involved in the spatial control of cytokinesis by a proper phragmoplast guidance. The protein is Kinesin-like protein KIN-12D of Arabidopsis thaliana (Mouse-ear cress).